The following is a 206-amino-acid chain: Outer-membrane lipoprotein LolB (206 aa).

Positions 1–18 (MSLLKNLLAPCLALLLAG) are cleaved as a signal peptide. Cys19 carries the N-palmitoyl cysteine lipid modification. Cys19 carries S-diacylglycerol cysteine lipidation.

Belongs to the LolB family. As to quaternary structure, monomer.

It localises to the cell outer membrane. Its function is as follows. Plays a critical role in the incorporation of lipoproteins in the outer membrane after they are released by the LolA protein. The polypeptide is Outer-membrane lipoprotein LolB (Stutzerimonas stutzeri (strain A1501) (Pseudomonas stutzeri)).